Consider the following 126-residue polypeptide: Aspartate 1-decarboxylase (126 aa).

Ser25 functions as the Schiff-base intermediate with substrate; via pyruvic acid in the catalytic mechanism. At Ser25 the chain carries Pyruvic acid (Ser). Thr57 provides a ligand contact to substrate. Residue Tyr58 is the Proton donor of the active site. 73–75 contributes to the substrate binding site; it reads GAA.

Belongs to the PanD family. In terms of assembly, heterooctamer of four alpha and four beta subunits. Pyruvate serves as cofactor. Is synthesized initially as an inactive proenzyme, which is activated by self-cleavage at a specific serine bond to produce a beta-subunit with a hydroxyl group at its C-terminus and an alpha-subunit with a pyruvoyl group at its N-terminus.

It localises to the cytoplasm. The catalysed reaction is L-aspartate + H(+) = beta-alanine + CO2. It participates in cofactor biosynthesis; (R)-pantothenate biosynthesis; beta-alanine from L-aspartate: step 1/1. In terms of biological role, catalyzes the pyruvoyl-dependent decarboxylation of aspartate to produce beta-alanine. The protein is Aspartate 1-decarboxylase of Edwardsiella ictaluri (strain 93-146).